The sequence spans 414 residues: Probable serine/threonine-protein kinase PBL26 (414 aa).

Cys3 carries S-palmitoyl cysteine lipidation. A compositionally biased stretch (basic and acidic residues) spans 17 to 41 (RDSDNSYRRNGEVTGRDNNKTHPEN). The disordered stretch occupies residues 17-55 (RDSDNSYRRNGEVTGRDNNKTHPENPKTVNEQNKNNDED). The Protein kinase domain occupies 79-356 (FRQECLIGEG…SDVVTALGFL (278 aa)). ATP is bound by residues 85–93 (IGEGGFGRV) and Lys108. At Tyr153 the chain carries Phosphotyrosine. The active-site Proton acceptor is the Asp206. Ser240 carries the post-translational modification Phosphoserine. Thr246 is modified (phosphothreonine). At Tyr254 the chain carries Phosphotyrosine. The interval 364-394 (ISVPHYDDPPQPSDETSVEDSVAAEERERAV) is disordered.

It belongs to the protein kinase superfamily. Ser/Thr protein kinase family. In terms of processing, palmitoylation at Cys-3 and Cys-6 are required for plasma membrane location.

The protein localises to the cell membrane. The catalysed reaction is L-seryl-[protein] + ATP = O-phospho-L-seryl-[protein] + ADP + H(+). It carries out the reaction L-threonyl-[protein] + ATP = O-phospho-L-threonyl-[protein] + ADP + H(+). Its function is as follows. May be involved in plant defense signaling. This chain is Probable serine/threonine-protein kinase PBL26, found in Arabidopsis thaliana (Mouse-ear cress).